A 302-amino-acid chain; its full sequence is Aspartate carbamoyltransferase catalytic subunit (302 aa).

Positions 54 and 55 each coordinate carbamoyl phosphate. Lys82 is a binding site for L-aspartate. Residues Arg104, His132, and Gln135 each contribute to the carbamoyl phosphate site. L-aspartate-binding residues include Arg165 and Arg217. Carbamoyl phosphate-binding residues include Gly257 and Pro258.

Belongs to the aspartate/ornithine carbamoyltransferase superfamily. ATCase family. Heterododecamer (2C3:3R2) of six catalytic PyrB chains organized as two trimers (C3), and six regulatory PyrI chains organized as three dimers (R2).

It catalyses the reaction carbamoyl phosphate + L-aspartate = N-carbamoyl-L-aspartate + phosphate + H(+). It functions in the pathway pyrimidine metabolism; UMP biosynthesis via de novo pathway; (S)-dihydroorotate from bicarbonate: step 2/3. Functionally, catalyzes the condensation of carbamoyl phosphate and aspartate to form carbamoyl aspartate and inorganic phosphate, the committed step in the de novo pyrimidine nucleotide biosynthesis pathway. The chain is Aspartate carbamoyltransferase catalytic subunit from Thermus thermophilus (strain ATCC BAA-163 / DSM 7039 / HB27).